The chain runs to 117 residues: uncharacterized protein (117 aa).

A disordered region spans residues 1–20 (METKKLIGKPLQPARPVRHL).

This is an uncharacterized protein from Homo sapiens (Human).